Reading from the N-terminus, the 466-residue chain is 55 kDa erythrocyte membrane protein (466 aa).

The residue at position 2 (T2) is an N-acetylthreonine. S13 and S19 each carry phosphoserine. Residue T49 is modified to Phosphothreonine. S52, S57, and S110 each carry phosphoserine. A PDZ domain is found at 71-152 (LIQIEKVTEE…MISLKVIPNQ (82 aa)). One can recognise an SH3 domain in the interval 158–228 (ALQMFMRAQF…PSPELQEWRV (71 aa)). A Phosphoserine modification is found at S243. The segment at 268 to 466 (VVSYEEVVRL…PQWVPVSWVY (199 aa)) is interaction with PALS1. The Guanylate kinase-like domain maps to 282 to 451 (RKTLVLIGAS…TLKKLQEAFD (170 aa)).

The protein belongs to the MAGUK family. Heterodimer with PALS1. Interacts with DLG5 and NF2. Interacts (via guanylate kinase-like domain) with WHRN (via third PDZ domain). Post-translationally, palmitoylated.

It is found in the cell membrane. It localises to the cell projection. Its subcellular location is the stereocilium. Essential regulator of neutrophil polarity. Regulates neutrophil polarization by regulating AKT1 phosphorylation through a mechanism that is independent of PIK3CG activity. This is 55 kDa erythrocyte membrane protein (MPP1) from Papio anubis (Olive baboon).